The sequence spans 265 residues: Phosphate import ATP-binding protein PstB (265 aa).

Positions 18–260 (ISARDVQVFY…PEDPRTESYI (243 aa)) constitute an ABC transporter domain. 50-57 (GPSGCGKS) lines the ATP pocket.

The protein belongs to the ABC transporter superfamily. Phosphate importer (TC 3.A.1.7) family. As to quaternary structure, the complex is composed of two ATP-binding proteins (PstB), two transmembrane proteins (PstC and PstA) and a solute-binding protein (PstS).

It localises to the cell inner membrane. The enzyme catalyses phosphate(out) + ATP + H2O = ADP + 2 phosphate(in) + H(+). In terms of biological role, part of the ABC transporter complex PstSACB involved in phosphate import. Responsible for energy coupling to the transport system. This Roseobacter denitrificans (strain ATCC 33942 / OCh 114) (Erythrobacter sp. (strain OCh 114)) protein is Phosphate import ATP-binding protein PstB.